The sequence spans 223 residues: Thiamine-phosphate synthase (223 aa).

4-amino-2-methyl-5-(diphosphooxymethyl)pyrimidine is bound by residues glutamine 37 to lysine 41 and aspartate 72. Residues aspartate 73 and aspartate 92 each coordinate Mg(2+). Serine 110 provides a ligand contact to 4-amino-2-methyl-5-(diphosphooxymethyl)pyrimidine. Threonine 136–serine 138 lines the 2-[(2R,5Z)-2-carboxy-4-methylthiazol-5(2H)-ylidene]ethyl phosphate pocket. Lysine 139 lines the 4-amino-2-methyl-5-(diphosphooxymethyl)pyrimidine pocket. 2-[(2R,5Z)-2-carboxy-4-methylthiazol-5(2H)-ylidene]ethyl phosphate contacts are provided by residues glycine 168 and isoleucine 188–serine 189.

This sequence belongs to the thiamine-phosphate synthase family. Mg(2+) is required as a cofactor.

It carries out the reaction 2-[(2R,5Z)-2-carboxy-4-methylthiazol-5(2H)-ylidene]ethyl phosphate + 4-amino-2-methyl-5-(diphosphooxymethyl)pyrimidine + 2 H(+) = thiamine phosphate + CO2 + diphosphate. The catalysed reaction is 2-(2-carboxy-4-methylthiazol-5-yl)ethyl phosphate + 4-amino-2-methyl-5-(diphosphooxymethyl)pyrimidine + 2 H(+) = thiamine phosphate + CO2 + diphosphate. It catalyses the reaction 4-methyl-5-(2-phosphooxyethyl)-thiazole + 4-amino-2-methyl-5-(diphosphooxymethyl)pyrimidine + H(+) = thiamine phosphate + diphosphate. It participates in cofactor biosynthesis; thiamine diphosphate biosynthesis; thiamine phosphate from 4-amino-2-methyl-5-diphosphomethylpyrimidine and 4-methyl-5-(2-phosphoethyl)-thiazole: step 1/1. In terms of biological role, condenses 4-methyl-5-(beta-hydroxyethyl)thiazole monophosphate (THZ-P) and 2-methyl-4-amino-5-hydroxymethyl pyrimidine pyrophosphate (HMP-PP) to form thiamine monophosphate (TMP). The chain is Thiamine-phosphate synthase from Streptococcus agalactiae serotype Ia (strain ATCC 27591 / A909 / CDC SS700).